Here is a 366-residue protein sequence, read N- to C-terminus: NADH-quinone oxidoreductase subunit D (366 aa).

It belongs to the complex I 49 kDa subunit family. NDH-1 is composed of 14 different subunits. Subunits NuoB, C, D, E, F, and G constitute the peripheral sector of the complex.

The protein localises to the cell membrane. The enzyme catalyses a quinone + NADH + 5 H(+)(in) = a quinol + NAD(+) + 4 H(+)(out). Its function is as follows. NDH-1 shuttles electrons from NADH, via FMN and iron-sulfur (Fe-S) centers, to quinones in the respiratory chain. The immediate electron acceptor for the enzyme in this species is believed to be a menaquinone. Couples the redox reaction to proton translocation (for every two electrons transferred, four hydrogen ions are translocated across the cytoplasmic membrane), and thus conserves the redox energy in a proton gradient. This is NADH-quinone oxidoreductase subunit D from Bacillus mycoides (strain KBAB4) (Bacillus weihenstephanensis).